The primary structure comprises 189 residues: Peptidyl-tRNA hydrolase (189 aa).

Tyrosine 15 lines the tRNA pocket. The Proton acceptor role is filled by histidine 20. 3 residues coordinate tRNA: phenylalanine 66, asparagine 68, and asparagine 114.

This sequence belongs to the PTH family. As to quaternary structure, monomer.

The protein localises to the cytoplasm. It carries out the reaction an N-acyl-L-alpha-aminoacyl-tRNA + H2O = an N-acyl-L-amino acid + a tRNA + H(+). Its function is as follows. Hydrolyzes ribosome-free peptidyl-tRNAs (with 1 or more amino acids incorporated), which drop off the ribosome during protein synthesis, or as a result of ribosome stalling. In terms of biological role, catalyzes the release of premature peptidyl moieties from peptidyl-tRNA molecules trapped in stalled 50S ribosomal subunits, and thus maintains levels of free tRNAs and 50S ribosomes. In Streptococcus sanguinis (strain SK36), this protein is Peptidyl-tRNA hydrolase.